A 115-amino-acid chain; its full sequence is MRLNHKQGEAGEDAALAFLQSQGCTLLARNWHCAYGEIDLIVKNGGMILFVEVKYRKNRQFGGAAYSISPSKLLKLQRSVEYYLQQNRLTNVPCRLDAVLIEGSRPPEWIQNITG.

Belongs to the UPF0102 family.

In Neisseria meningitidis serogroup A / serotype 4A (strain DSM 15465 / Z2491), this protein is UPF0102 protein NMA0341.